Here is a 540-residue protein sequence, read N- to C-terminus: Chaperonin GroEL (540 aa).

Residues 29-32, 86-90, glycine 413, 476-478, and aspartate 492 each bind ATP; these read TLGP, DGTTT, and NAA.

The protein belongs to the chaperonin (HSP60) family. As to quaternary structure, forms a cylinder of 14 subunits composed of two heptameric rings stacked back-to-back. Interacts with the co-chaperonin GroES.

Its subcellular location is the cytoplasm. It carries out the reaction ATP + H2O + a folded polypeptide = ADP + phosphate + an unfolded polypeptide.. Functionally, together with its co-chaperonin GroES, plays an essential role in assisting protein folding. The GroEL-GroES system forms a nano-cage that allows encapsulation of the non-native substrate proteins and provides a physical environment optimized to promote and accelerate protein folding. The sequence is that of Chaperonin GroEL from Streptococcus constellatus.